We begin with the raw amino-acid sequence, 490 residues long: Bifunctional protein GlmU (490 aa).

The pyrophosphorylase stretch occupies residues 1–241; it reads MSSPGDTAVL…SALVAGVNNR (241 aa). Residues 12–15, Lys26, Gln83, 88–89, 112–114, Gly151, Glu166, Asn181, and Asn239 each bind UDP-N-acetyl-alpha-D-glucosamine; these read LAAG, GT, and SGD. Mg(2+) is bound at residue Asp114. Asn239 is a Mg(2+) binding site. Positions 242–262 are linker; it reads VQLAQLGAELNRRIVAAHQLA. The interval 263–490 is N-acetyltransferase; sequence GVTVVDPATT…AGGRPAGEAE (228 aa). 2 residues coordinate UDP-N-acetyl-alpha-D-glucosamine: Arg344 and Lys362. His374 acts as the Proton acceptor in catalysis. Positions 377 and 388 each coordinate UDP-N-acetyl-alpha-D-glucosamine. Residues Ala391, 397-398, Ser416, and Ala434 contribute to the acetyl-CoA site; that span reads NY. The disordered stretch occupies residues 462–490; the sequence is RRKRPGSAAARAAEAAEKAAGGRPAGEAE. The span at 467–490 shows a compositional bias: low complexity; that stretch reads GSAAARAAEAAEKAAGGRPAGEAE.

This sequence in the N-terminal section; belongs to the N-acetylglucosamine-1-phosphate uridyltransferase family. The protein in the C-terminal section; belongs to the transferase hexapeptide repeat family. In terms of assembly, homotrimer. The cofactor is Mg(2+).

Its subcellular location is the cytoplasm. It carries out the reaction alpha-D-glucosamine 1-phosphate + acetyl-CoA = N-acetyl-alpha-D-glucosamine 1-phosphate + CoA + H(+). The catalysed reaction is N-acetyl-alpha-D-glucosamine 1-phosphate + UTP + H(+) = UDP-N-acetyl-alpha-D-glucosamine + diphosphate. It participates in nucleotide-sugar biosynthesis; UDP-N-acetyl-alpha-D-glucosamine biosynthesis; N-acetyl-alpha-D-glucosamine 1-phosphate from alpha-D-glucosamine 6-phosphate (route II): step 2/2. The protein operates within nucleotide-sugar biosynthesis; UDP-N-acetyl-alpha-D-glucosamine biosynthesis; UDP-N-acetyl-alpha-D-glucosamine from N-acetyl-alpha-D-glucosamine 1-phosphate: step 1/1. Its pathway is bacterial outer membrane biogenesis; LPS lipid A biosynthesis. In terms of biological role, catalyzes the last two sequential reactions in the de novo biosynthetic pathway for UDP-N-acetylglucosamine (UDP-GlcNAc). The C-terminal domain catalyzes the transfer of acetyl group from acetyl coenzyme A to glucosamine-1-phosphate (GlcN-1-P) to produce N-acetylglucosamine-1-phosphate (GlcNAc-1-P), which is converted into UDP-GlcNAc by the transfer of uridine 5-monophosphate (from uridine 5-triphosphate), a reaction catalyzed by the N-terminal domain. The polypeptide is Bifunctional protein GlmU (Mycobacterium avium (strain 104)).